A 4644-amino-acid chain; its full sequence is Cytoplasmic dynein 1 heavy chain 1 (4644 aa).

Ser-2 is subject to N-acetylserine. Residues 2–1865 (SEPGGGEDGS…SIQMANAKFN (1864 aa)) form a stem region. 4 coiled-coil regions span residues 48–69 (AALEAALEEKSALEQMRKFLSD), 179–200 (SVEKKIAELEMGLLHLQQNIEI), 453–476 (AHRKLQARLDQMRKFRRQHEQLRA), and 541–564 (TEAWEAAMKRYDERIDRVETRITA). A Phosphoserine modification is found at Ser-68. Residues 446–701 (MVWRINPAHR…NTQEIFDDWA (256 aa)) are interaction with DYNC1I2. The interval 649–800 (AKQIDRQLTA…EKVEERNTIS (152 aa)) is interaction with DYNC1LI2. The residue at position 1123 (Lys-1123) is an N6-acetyllysine. Residues 1169-1201 (TYVQSLKRKIKQFEKQVELYRNGQRLLEKQRFQ) adopt a coiled-coil conformation. Ser-1228 bears the Phosphoserine mark. 2 coiled-coil regions span residues 1229–1250 (AIQQQVANLQMKIVQEDRAVES) and 1355–1371 (RKLRQNLDGLLNQLKNF). 4 AAA regions span residues 1866 to 2097 (YGFE…VLVS), 2178 to 2450 (EELK…LTRL), 2554 to 2803 (EVET…WVRG), and 2897 to 3166 (VFYE…GGRT). ATP contacts are provided by residues 1904–1911 (GPAGTGKT) and 2222–2229 (GPSGSGKS). The tract at residues 2388-2408 (GEDEAQRRRKGKEDEGEEAAS) is disordered. ATP-binding positions include 2593–2600 (GPPGSGKT) and 2935–2942 (GVSGAGKT). Coiled coils occupy residues 3187 to 3273 (EKRS…ADKQ), 3394 to 3498 (AIAQ…KNQM), and 3735 to 3798 (EFQL…VSQQ). Positions 3187 to 3498 (EKRSELEEQQ…KTSETFKNQM (312 aa)) are stalk. Position 3478 is an N6-acetyllysine (Lys-3478). AAA regions lie at residues 3551–3780 (LSNA…EVTR) and 4003–4219 (AHMF…TVDT). Ser-4160 is subject to Phosphoserine. Position 4281 is an N6-acetyllysine (Lys-4281). A Phosphothreonine modification is found at Thr-4364. Position 4366 is a phosphoserine (Ser-4366).

Belongs to the dynein heavy chain family. In terms of assembly, homodimer. The cytoplasmic dynein 1 complex consists of two catalytic heavy chains (HCs) and a number of non-catalytic subunits presented by intermediate chains (ICs), light intermediate chains (LICs) and light chains (LCs); the composition seems to vary in respect to the IC, LIC and LC composition. The heavy chain homodimer serves as a scaffold for the probable homodimeric assembly of the respective non-catalytic subunits. The ICs and LICs bind directly to the HC dimer and dynein LCs assemble on the IC dimer. Interacts with DYNC1LI1; DYNC1LI1 and DYNC1LI2 bind mutually exclusive to DYNC1H1. Interacts with DYNC1LI2; DYNC1LI1 and DYNC1LI2 bind mutually exclusive to DYNC1H1. Interacts with DYNC1I2. Interacts with BICD2. Interacts with DNALI1.

The protein localises to the cytoplasm. The protein resides in the cytoskeleton. Functionally, cytoplasmic dynein 1 acts as a motor for the intracellular retrograde motility of vesicles and organelles along microtubules. Dynein has ATPase activity; the force-producing power stroke is thought to occur on release of ADP. Plays a role in mitotic spindle assembly and metaphase plate congression. This is Cytoplasmic dynein 1 heavy chain 1 (Dync1h1) from Mus musculus (Mouse).